Here is a 441-residue protein sequence, read N- to C-terminus: Trigger factor (441 aa).

Residues 161–246 enclose the PPIase FKBP-type domain; it reads GDKVTIDFLG…VHEVLGEKLP (86 aa).

This sequence belongs to the FKBP-type PPIase family. Tig subfamily.

Its subcellular location is the cytoplasm. The catalysed reaction is [protein]-peptidylproline (omega=180) = [protein]-peptidylproline (omega=0). Its function is as follows. Involved in protein export. Acts as a chaperone by maintaining the newly synthesized protein in an open conformation. Functions as a peptidyl-prolyl cis-trans isomerase. This chain is Trigger factor, found in Teredinibacter turnerae (strain ATCC 39867 / T7901).